Reading from the N-terminus, the 478-residue chain is MAKVTDFKVADLSLAEAGRHQIRLAEYEMPGLMQLRREYAEEQPLKGARIAGSIHMTVQTAVLIETLTALGAEVRWASCNIFSTQDEAAAAIVVGDGTPEDPQGVPVFAWKGETLDEYWWCINQIFSWEGELPNMILDDGGDATMAVIRGREYEKAGVVPQPEANDSDEYIAFLGMLREVLAEEPDKWTRLADSIKGVTEETTTGVHRLYHFAEEGVLPFPAMNVNDAVTKSKFDNKYGTRHSLIDGINRATDMLMGGKNVLVCGYGDVGKGCAEAFDGQGARVRVTEADPINALQALMDGYSVVTVDEAIADADIVITATGNKDIISYEQMLKMKDHALLGNIGHFDNEIDMHSLLHRDDVIRTTIKPQVDEFTFPNGKSIIVLSEGRLLNLGNATGHPSFVMSTSFADQTIAQIELFQNEGQYENQVYRLPKILDEKVARIHVEALGGKLTELTKEQAEYIGVDVAGPFKPEHYRY.

Positions 57, 139, and 201 each coordinate substrate. Residue 202-204 participates in NAD(+) binding; it reads TTT. Substrate is bound by residues Lys-231 and Asp-235. Residues Asn-236, 265–270, Glu-288, Asn-323, 344–346, and Asn-392 each bind NAD(+); these read GYGDVG and IGH.

It belongs to the adenosylhomocysteinase family. NAD(+) serves as cofactor.

The protein localises to the cytoplasm. The catalysed reaction is S-adenosyl-L-homocysteine + H2O = L-homocysteine + adenosine. It participates in amino-acid biosynthesis; L-homocysteine biosynthesis; L-homocysteine from S-adenosyl-L-homocysteine: step 1/1. May play a key role in the regulation of the intracellular concentration of adenosylhomocysteine. In Corynebacterium efficiens (strain DSM 44549 / YS-314 / AJ 12310 / JCM 11189 / NBRC 100395), this protein is Adenosylhomocysteinase.